We begin with the raw amino-acid sequence, 338 residues long: Flap endonuclease 1 (338 aa).

The tract at residues 1–98 (MGTDIGDLLL…DTLAKRHEVR (98 aa)) is N-domain. Positions 27, 80, 152, 154, 173, 175, and 236 each coordinate Mg(2+). The I-domain stretch occupies residues 116 to 257 (EAYKYAQASS…RALKLVKEHG (142 aa)). An interaction with PCNA region spans residues 330–338 (SQSTLDQWF).

The protein belongs to the XPG/RAD2 endonuclease family. FEN1 subfamily. Interacts with PCNA. PCNA stimulates the nuclease activity without altering cleavage specificity. The cofactor is Mg(2+).

In terms of biological role, structure-specific nuclease with 5'-flap endonuclease and 5'-3' exonuclease activities involved in DNA replication and repair. During DNA replication, cleaves the 5'-overhanging flap structure that is generated by displacement synthesis when DNA polymerase encounters the 5'-end of a downstream Okazaki fragment. Binds the unpaired 3'-DNA end and kinks the DNA to facilitate 5' cleavage specificity. Cleaves one nucleotide into the double-stranded DNA from the junction in flap DNA, leaving a nick for ligation. Also involved in the base excision repair (BER) pathway. Acts as a genome stabilization factor that prevents flaps from equilibrating into structures that lead to duplications and deletions. Also possesses 5'-3' exonuclease activity on nicked or gapped double-stranded DNA. The protein is Flap endonuclease 1 of Methanococcoides burtonii (strain DSM 6242 / NBRC 107633 / OCM 468 / ACE-M).